The following is a 349-amino-acid chain: Ethyl acetate hydrolase (349 aa).

In terms of domain architecture, AB hydrolase-1 spans 67-300 (YIGEGRALDP…SHDQFFTVDD (234 aa)). Ser139 acts as the Nucleophile in catalysis. Catalysis depends on residues Asp293 and His322.

The protein belongs to the AB hydrolase superfamily. Acetyl esterase family. In terms of assembly, homodimer.

It catalyses the reaction ethyl acetate + H2O = ethanol + acetate + H(+). In terms of biological role, esterase that catalyzes the hydrolysis of ethyl acetate. Involved in the degradation of short chain methyl ketones (MEK) such as 2-butanone and 2-hexanone. In vitro, can also hydrolyze vinyl acetate, 4-nitrophenyl acetate, methyl acetate, propyl acetate, benzyl acetate and methyl propionate. The highest activities are obtained with acetic acid esters, but the alcohol group also plays an important role, as compounds with two carbon atoms in the alcohol moiety, i.e., vinyl and ethyl acetate, are by far the preferred substrates. This chain is Ethyl acetate hydrolase, found in Pseudomonas veronii.